The sequence spans 170 residues: MIIERLTGNLRDLNPLDFKVDYVDLEWFETRKKIARFKTRQGKDIAIRLKDAPKLGLSQGDILFKEEKEIIAINILDSEVIHIQAKSVAEVAKICYEIGNRHATLYYGESQFEFKTPFEKPTLALLEKLGVQNRVLSSKLDSKERLTVSMPHNEPNFKVSLASDFKVVMK.

It belongs to the UreE family.

It localises to the cytoplasm. Involved in urease metallocenter assembly. Binds nickel. Probably functions as a nickel donor during metallocenter assembly. The protein is Urease accessory protein UreE of Helicobacter acinonychis (strain Sheeba).